The chain runs to 396 residues: Elongation factor Tu 2 (396 aa).

The region spanning 10 to 206 (KPHVNVGTIG…ALDTYIPTPE (197 aa)) is the tr-type G domain. The G1 stretch occupies residues 19-26 (GHVDHGKT). A GTP-binding site is contributed by 19-26 (GHVDHGKT). Residue Thr-26 participates in Mg(2+) binding. A G2 region spans residues 60 to 64 (GITIN). The G3 stretch occupies residues 81–84 (DCPG). GTP is bound by residues 81 to 85 (DCPGH) and 136 to 139 (NKCD). A G4 region spans residues 136 to 139 (NKCD). The G5 stretch occupies residues 174 to 176 (SAK).

This sequence belongs to the TRAFAC class translation factor GTPase superfamily. Classic translation factor GTPase family. EF-Tu/EF-1A subfamily. As to quaternary structure, monomer.

It localises to the cytoplasm. The catalysed reaction is GTP + H2O = GDP + phosphate + H(+). GTP hydrolase that promotes the GTP-dependent binding of aminoacyl-tRNA to the A-site of ribosomes during protein biosynthesis. This Acidovorax sp. (strain JS42) protein is Elongation factor Tu 2.